The sequence spans 260 residues: Glutamate racemase (260 aa).

Residues 7–8 (DS) and 39–40 (YG) contribute to the substrate site. Catalysis depends on Cys71, which acts as the Proton donor/acceptor. 72-73 (NT) contacts substrate. Cys182 serves as the catalytic Proton donor/acceptor. Position 183–184 (183–184 (TH)) interacts with substrate.

This sequence belongs to the aspartate/glutamate racemases family.

The enzyme catalyses L-glutamate = D-glutamate. It functions in the pathway cell wall biogenesis; peptidoglycan biosynthesis. Provides the (R)-glutamate required for cell wall biosynthesis. The sequence is that of Glutamate racemase from Sulfurihydrogenibium sp. (strain YO3AOP1).